We begin with the raw amino-acid sequence, 240 residues long: tRNA (guanine-N(1)-)-methyltransferase (240 aa).

S-adenosyl-L-methionine is bound by residues Gly-111 and 130 to 135; that span reads IGDYVI.

This sequence belongs to the RNA methyltransferase TrmD family. As to quaternary structure, homodimer.

It localises to the cytoplasm. It catalyses the reaction guanosine(37) in tRNA + S-adenosyl-L-methionine = N(1)-methylguanosine(37) in tRNA + S-adenosyl-L-homocysteine + H(+). Its function is as follows. Specifically methylates guanosine-37 in various tRNAs. The polypeptide is tRNA (guanine-N(1)-)-methyltransferase (Mycoplasma mycoides subsp. mycoides SC (strain CCUG 32753 / NCTC 10114 / PG1)).